The sequence spans 592 residues: Aspartate--tRNA ligase (592 aa).

E173 is an L-aspartate binding site. An aspartate region spans residues 197–200 (QLFK). Residue R219 coordinates L-aspartate. ATP contacts are provided by residues 219 to 221 (RDE) and Q228. H448 provides a ligand contact to L-aspartate. E482 is an ATP binding site. R489 is an L-aspartate binding site. An ATP-binding site is contributed by 534-537 (GLDR).

The protein belongs to the class-II aminoacyl-tRNA synthetase family. Type 1 subfamily. In terms of assembly, homodimer.

Its subcellular location is the cytoplasm. The enzyme catalyses tRNA(Asp) + L-aspartate + ATP = L-aspartyl-tRNA(Asp) + AMP + diphosphate. Functionally, catalyzes the attachment of L-aspartate to tRNA(Asp) in a two-step reaction: L-aspartate is first activated by ATP to form Asp-AMP and then transferred to the acceptor end of tRNA(Asp). This is Aspartate--tRNA ligase from Shewanella baltica (strain OS155 / ATCC BAA-1091).